A 118-amino-acid chain; its full sequence is MKLRANRVGEQMKKELGDIISRKIKDPRVGFVTVTDVQVSRDLQIATVYISVLGDEEQKENTLKGLAKAKGFIRSEIGQRIRLRKTPEISFEFDESIGYGHRIDTLLHEINKEGKREE.

Belongs to the RbfA family. In terms of assembly, monomer. Binds 30S ribosomal subunits, but not 50S ribosomal subunits or 70S ribosomes.

Its subcellular location is the cytoplasm. One of several proteins that assist in the late maturation steps of the functional core of the 30S ribosomal subunit. Associates with free 30S ribosomal subunits (but not with 30S subunits that are part of 70S ribosomes or polysomes). Required for efficient processing of 16S rRNA. May interact with the 5'-terminal helix region of 16S rRNA. The protein is Ribosome-binding factor A of Bacillus anthracis (strain A0248).